The chain runs to 78 residues: UPF0349 protein ABC2936 (78 aa).

The protein belongs to the UPF0349 family.

In Shouchella clausii (strain KSM-K16) (Alkalihalobacillus clausii), this protein is UPF0349 protein ABC2936.